The chain runs to 89 residues: Small ribosomal subunit protein uS15 (89 aa).

A compositionally biased stretch (basic and acidic residues) spans 1–18 (MSLDTAEKQKLIENHQVH). The tract at residues 1–23 (MSLDTAEKQKLIENHQVHPTDTG) is disordered.

The protein belongs to the universal ribosomal protein uS15 family. In terms of assembly, part of the 30S ribosomal subunit. Forms a bridge to the 50S subunit in the 70S ribosome, contacting the 23S rRNA.

One of the primary rRNA binding proteins, it binds directly to 16S rRNA where it helps nucleate assembly of the platform of the 30S subunit by binding and bridging several RNA helices of the 16S rRNA. Functionally, forms an intersubunit bridge (bridge B4) with the 23S rRNA of the 50S subunit in the ribosome. This chain is Small ribosomal subunit protein uS15, found in Prochlorococcus marinus (strain MIT 9301).